We begin with the raw amino-acid sequence, 79 residues long: Cell division protein ZapB (79 aa).

A coiled-coil region spans residues 4 to 78 (EVFEKLESKV…LRALLGKMEE (75 aa)).

This sequence belongs to the ZapB family. In terms of assembly, homodimer. The ends of the coiled-coil dimer bind to each other, forming polymers. Interacts with FtsZ.

It is found in the cytoplasm. In terms of biological role, non-essential, abundant cell division factor that is required for proper Z-ring formation. It is recruited early to the divisome by direct interaction with FtsZ, stimulating Z-ring assembly and thereby promoting cell division earlier in the cell cycle. Its recruitment to the Z-ring requires functional FtsA or ZipA. The chain is Cell division protein ZapB from Serratia proteamaculans (strain 568).